Consider the following 333-residue polypeptide: L-lactate dehydrogenase B chain (333 aa).

NAD(+)-binding positions include 29–57 (GQVGMACAISILGKGLCDELALVDVLEDK) and arginine 99. Arginine 106, asparagine 138, and arginine 169 together coordinate substrate. Asparagine 138 lines the NAD(+) pocket. Histidine 193 serves as the catalytic Proton acceptor. Threonine 248 is a binding site for substrate.

This sequence belongs to the LDH/MDH superfamily. LDH family. As to quaternary structure, homotetramer.

It localises to the cytoplasm. The enzyme catalyses (S)-lactate + NAD(+) = pyruvate + NADH + H(+). The protein operates within fermentation; pyruvate fermentation to lactate; (S)-lactate from pyruvate: step 1/1. In terms of biological role, interconverts simultaneously and stereospecifically pyruvate and lactate with concomitant interconversion of NADH and NAD(+). In Gallus gallus (Chicken), this protein is L-lactate dehydrogenase B chain (LDHB).